We begin with the raw amino-acid sequence, 256 residues long: MAVGKNKRLSKGKKGLKKKAVDPFARKEWFDIKAPSTFENRNVGKTLINKSTGLKNAADGLKGRVFEVCLADLQGSEDHSYRKVKLRVDEVQGKNLLTNFHGLDFTSDKLRSLVRKWQSLVEANVTVKTADDYVLRVFAIAFTKRQANQVKKTTYAQSSKLREVRKKMIEIMQREVSNVTLAQLTSKLIPEVIGREIEKSTQSILPLQNIHIRKVKLLKQPKFDLGSLLALHGEGSTEEKGKKVSSGFKDVVLETV.

Alanine 2 carries the N-acetylalanine; partial modification.

It belongs to the eukaryotic ribosomal protein eS1 family. Component of the small ribosomal subunit. Mature ribosomes consist of a small (40S) and a large (60S) subunit. The 40S subunit contains about 33 different proteins and 1 molecule of RNA (18S). The 60S subunit contains about 49 different proteins and 3 molecules of RNA (25S, 5.8S and 5S).

It localises to the cytoplasm. This is Small ribosomal subunit protein eS1A from Clavispora lusitaniae (strain ATCC 42720) (Yeast).